The chain runs to 295 residues: Cytidine deaminase (295 aa).

2 consecutive CMP/dCMP-type deaminase domains span residues 48–168 (SDKE…FGPA) and 187–295 (DDKD…FVNV). 89-91 (NME) serves as a coordination point for substrate. Zn(2+) is bound at residue His102. The active-site Proton donor is Glu104. Positions 129 and 132 each coordinate Zn(2+).

It belongs to the cytidine and deoxycytidylate deaminase family. As to quaternary structure, homodimer. Zn(2+) serves as cofactor.

The catalysed reaction is cytidine + H2O + H(+) = uridine + NH4(+). It catalyses the reaction 2'-deoxycytidine + H2O + H(+) = 2'-deoxyuridine + NH4(+). In terms of biological role, this enzyme scavenges exogenous and endogenous cytidine and 2'-deoxycytidine for UMP synthesis. The protein is Cytidine deaminase of Vibrio parahaemolyticus serotype O3:K6 (strain RIMD 2210633).